A 329-amino-acid polypeptide reads, in one-letter code: GTPase Obg (329 aa).

Residues 1–159 (MQFIDQARIT…WFLQLELKLL (159 aa)) enclose the Obg domain. Residues 160-328 (AEVGIIGLPN…LLAQVWKELG (169 aa)) enclose the OBG-type G domain. Residues 166-173 (GLPNAGKS), 191-195 (FTTLV), 213-216 (DIPG), 280-283 (NKQE), and 309-311 (SAA) contribute to the ATP site. Residues Ser-173 and Thr-193 each contribute to the Mg(2+) site.

It belongs to the TRAFAC class OBG-HflX-like GTPase superfamily. OBG GTPase family. In terms of assembly, monomer. Requires Mg(2+) as cofactor.

The protein localises to the cytoplasm. Its function is as follows. An essential GTPase which binds GTP, GDP and possibly (p)ppGpp with moderate affinity, with high nucleotide exchange rates and a fairly low GTP hydrolysis rate. Plays a role in control of the cell cycle, stress response, ribosome biogenesis and in those bacteria that undergo differentiation, in morphogenesis control. This chain is GTPase Obg, found in Prochlorococcus marinus (strain MIT 9313).